Reading from the N-terminus, the 93-residue chain is Ribonuclease P protein component 4 (93 aa).

Zn(2+)-binding residues include Cys-55, Cys-58, Cys-81, and Cys-83.

This sequence belongs to the eukaryotic/archaeal RNase P protein component 4 family. As to quaternary structure, consists of a catalytic RNA component and at least 4-5 protein subunits. Zn(2+) is required as a cofactor.

It is found in the cytoplasm. It carries out the reaction Endonucleolytic cleavage of RNA, removing 5'-extranucleotides from tRNA precursor.. Functionally, part of ribonuclease P, a protein complex that generates mature tRNA molecules by cleaving their 5'-ends. The protein is Ribonuclease P protein component 4 of Halobacterium salinarum (strain ATCC 29341 / DSM 671 / R1).